The following is a 198-amino-acid chain: Glycerol-3-phosphate acyltransferase (198 aa).

The next 6 helical transmembrane spans lie at 1–21, 50–70, 77–97, 111–131, 136–156, and 157–177; these read MHILIISISYFLGSLPTGFLF, WPAFFVFIIDVGKGLIAVKIA, NLFEVLAGIAAISGHIWPIWL, MFIALSWKIGFASLGIFLIIL, IVSLSSISAAIFLPFLMFLDI, and GSTNHPYFFISLVVSILVIWK.

Belongs to the PlsY family. Probably interacts with PlsX.

The protein localises to the cell inner membrane. The enzyme catalyses an acyl phosphate + sn-glycerol 3-phosphate = a 1-acyl-sn-glycero-3-phosphate + phosphate. It functions in the pathway lipid metabolism; phospholipid metabolism. Catalyzes the transfer of an acyl group from acyl-phosphate (acyl-PO(4)) to glycerol-3-phosphate (G3P) to form lysophosphatidic acid (LPA). This enzyme utilizes acyl-phosphate as fatty acyl donor, but not acyl-CoA or acyl-ACP. This chain is Glycerol-3-phosphate acyltransferase, found in Prochlorococcus marinus subsp. pastoris (strain CCMP1986 / NIES-2087 / MED4).